Reading from the N-terminus, the 379-residue chain is NADH-quinone oxidoreductase subunit D 2 (379 aa).

This sequence belongs to the complex I 49 kDa subunit family. In terms of assembly, NDH-1 is composed of 14 different subunits. Subunits NuoB, C, D, E, F, and G constitute the peripheral sector of the complex.

It is found in the cell inner membrane. The catalysed reaction is a quinone + NADH + 5 H(+)(in) = a quinol + NAD(+) + 4 H(+)(out). In terms of biological role, NDH-1 shuttles electrons from NADH, via FMN and iron-sulfur (Fe-S) centers, to quinones in the respiratory chain. The immediate electron acceptor for the enzyme in this species is believed to be ubiquinone. Couples the redox reaction to proton translocation (for every two electrons transferred, four hydrogen ions are translocated across the cytoplasmic membrane), and thus conserves the redox energy in a proton gradient. This Anaeromyxobacter dehalogenans (strain 2CP-C) protein is NADH-quinone oxidoreductase subunit D 2.